The primary structure comprises 408 residues: Phosphatidylinositol transfer protein CSR1 (408 aa).

Residue S2 is modified to N-acetylserine. The residue at position 2 (S2) is a Phosphoserine. The CRAL-TRIO domain maps to 157-317 (ETGVIKNLEL…YLGGENDNDL (161 aa)).

It belongs to the PITP family. As to quaternary structure, forms a complex with 2 TSA2 subunits. Binds phosphatidylinositol (PtdIns).

The protein resides in the cytoplasm. Its subcellular location is the microsome. It is found in the endosome. It catalyses the reaction a 1,2-diacyl-sn-glycero-3-phospho-(1D-myo-inositol)(in) = a 1,2-diacyl-sn-glycero-3-phospho-(1D-myo-inositol)(out). Functionally, non-classical phosphatidylinositol (PtdIns) transfer protein (PITP), which exhibits PtdIns-binding/transfer activity in the absence of detectable PtdCho-binding/transfer activity. Activates SPO14/PLD1 (phospholipase D1) by stimulating phosphoinositide synthesis via the STT4 PtdIns 4-kinase. Modulates ArfGAP function through effects on SPO14 activity. Inhibits phosphatidylcholine degradation by PLB1 (phospholipase B1). May also regulate post-Golgi membrane-trafficking events and have a role resistance to oxidative stress. Inhibits fatty acid synthase activity in response to heme depletion and oleic acid starvation, preventing saturated fatty acid (SFA) accumulation. In Saccharomyces cerevisiae (strain ATCC 204508 / S288c) (Baker's yeast), this protein is Phosphatidylinositol transfer protein CSR1 (CSR1).